We begin with the raw amino-acid sequence, 98 residues long: MSCYDLCRPCGPTPLANSCNEPCVRQCQDSRVIIEPSPVVVTLPGPILSSFPQNTAVGSTTSAAVGSILSAEGVPISSGGFSLSGLGGRYSGRRCLPC.

Ser-2 is subject to N-acetylserine.

This sequence belongs to the avian keratin family. The avian keratins (F-ker, S-ker, C-ker and B-ker) are a complex mixture of very similar polypeptides.

This is Feather beta keratin from Mycteria americana (Wood stork).